A 740-amino-acid chain; its full sequence is Catalase-peroxidase (740 aa).

A disordered region spans residues 1–32 (MPEDRPIEDSPPIGEAQTDAPAGGCPAGFGRI). The tryptophyl-tyrosyl-methioninium (Trp-Tyr) (with M-263) cross-link spans 113-237 (WHAAGTYRVS…LAAVQMGLIY (125 aa)). The Proton acceptor role is filled by His114. Residues 237–263 (YVNPEGPNGNPDPQASAIDIRETFGRM) constitute a cross-link (tryptophyl-tyrosyl-methioninium (Tyr-Met) (with W-113)). His278 lines the heme b pocket.

Belongs to the peroxidase family. Peroxidase/catalase subfamily. As to quaternary structure, homodimer or homotetramer. It depends on heme b as a cofactor. Formation of the three residue Trp-Tyr-Met cross-link is important for the catalase, but not the peroxidase activity of the enzyme.

The enzyme catalyses H2O2 + AH2 = A + 2 H2O. It catalyses the reaction 2 H2O2 = O2 + 2 H2O. In terms of biological role, bifunctional enzyme with both catalase and broad-spectrum peroxidase activity. May play a role in the intracellular survival of mycobacteria. This is Catalase-peroxidase from Mycolicibacterium smegmatis (Mycobacterium smegmatis).